The sequence spans 125 residues: Histone H2B type 1 (125 aa).

A disordered region spans residues 1 to 36 (MPEPAKSRPAPKKGSKKAVTKAQKKDGKERKRSRKE). Proline 2 carries the post-translational modification N-acetylproline. Glutamate 3 is subject to ADP-ribosyl glutamic acid. Lysine 6 carries the N6-(2-hydroxyisobutyryl)lysine; alternate modification. Lysine 6 is subject to N6-(beta-hydroxybutyryl)lysine; alternate. At lysine 6 the chain carries N6-acetyllysine; alternate. At lysine 6 the chain carries N6-butyryllysine; alternate. Lysine 6 carries the post-translational modification N6-crotonyllysine; alternate. Residue lysine 6 is modified to N6-lactoyllysine; alternate. Lysine 6 participates in a covalent cross-link: Glycyl lysine isopeptide (Lys-Gly) (interchain with G-Cter in SUMO2); alternate. Serine 7 is modified (ADP-ribosylserine). Residues 9 to 19 (PAPKKGSKKAV) are compositionally biased toward basic residues. At lysine 12 the chain carries N6-(beta-hydroxybutyryl)lysine; alternate. Lysine 12 and lysine 13 each carry N6-acetyllysine; alternate. An N6-crotonyllysine; alternate mark is found at lysine 12 and lysine 13. Lysine 12 bears the N6-lactoyllysine; alternate mark. Lysine 13 carries the post-translational modification N6-(2-hydroxyisobutyryl)lysine; alternate. The residue at position 15 (serine 15) is a Phosphoserine; by STK4/MST1. 4 positions are modified to N6-acetyllysine; alternate: lysine 16, lysine 17, lysine 21, and lysine 24. N6-crotonyllysine; alternate occurs at positions 16, 17, 21, and 24. Lysine 16, lysine 17, lysine 21, and lysine 24 each carry N6-lactoyllysine; alternate. The residue at position 17 (lysine 17) is an N6-glutaryllysine; alternate. N6-(2-hydroxyisobutyryl)lysine; alternate occurs at positions 21 and 24. Lysine 21 is modified (N6-(beta-hydroxybutyryl)lysine; alternate). The residue at position 21 (lysine 21) is an N6-butyryllysine; alternate. Lysine 21 participates in a covalent cross-link: Glycyl lysine isopeptide (Lys-Gly) (interchain with G-Cter in SUMO2); alternate. Lysine 25 bears the N6-(2-hydroxyisobutyryl)lysine mark. Lysine 35 bears the N6-(2-hydroxyisobutyryl)lysine; alternate mark. At lysine 35 the chain carries N6-(beta-hydroxybutyryl)lysine; alternate. Lysine 35 carries the post-translational modification N6-crotonyllysine; alternate. At lysine 35 the chain carries N6-glutaryllysine; alternate. Residue lysine 35 is modified to N6-succinyllysine; alternate. Lysine 35 is covalently cross-linked (Glycyl lysine isopeptide (Lys-Gly) (interchain with G-Cter in ubiquitin); alternate). Glutamate 36 bears the PolyADP-ribosyl glutamic acid mark. At serine 37 the chain carries Phosphoserine; by AMPK. N6-(2-hydroxyisobutyryl)lysine; alternate occurs at positions 44, 47, and 58. Position 44 is an N6-lactoyllysine; alternate (lysine 44). N6-glutaryllysine; alternate occurs at positions 44 and 47. Lysine 47 is modified (N6-methyllysine; alternate). Lysine 58 is modified (N6,N6-dimethyllysine; alternate). Position 79 is a dimethylated arginine (arginine 79). Residue lysine 85 is modified to N6-(2-hydroxyisobutyryl)lysine; alternate. Lysine 85 is subject to N6-acetyllysine; alternate. Lysine 85 bears the N6-lactoyllysine; alternate mark. Lysine 85 is modified (N6,N6,N6-trimethyllysine; alternate). Residues arginine 86 and arginine 92 each carry the omega-N-methylarginine modification. Lysine 108 is subject to N6-(2-hydroxyisobutyryl)lysine; alternate. N6-lactoyllysine; alternate is present on lysine 108. Lysine 108 is subject to N6-glutaryllysine; alternate. Lysine 108 is subject to N6-methyllysine; alternate. A glycan (O-linked (GlcNAc) serine) is linked at serine 112. Threonine 115 carries the phosphothreonine modification. Residues lysine 116 and lysine 120 each carry the N6-(2-hydroxyisobutyryl)lysine; alternate modification. An N6-(beta-hydroxybutyryl)lysine; alternate modification is found at lysine 116. Lysine 116 and lysine 120 each carry N6-lactoyllysine; alternate. N6-glutaryllysine; alternate is present on residues lysine 116 and lysine 120. Residues lysine 116 and lysine 120 each carry the N6-succinyllysine; alternate modification. Lysine 116 carries the post-translational modification N6-methylated lysine; alternate. Lysine 120 participates in a covalent cross-link: Glycyl lysine isopeptide (Lys-Gly) (interchain with G-Cter in ubiquitin); alternate.

Belongs to the histone H2B family. As to quaternary structure, the nucleosome is a histone octamer containing two molecules each of H2A, H2B, H3 and H4 assembled in one H3-H4 heterotetramer and two H2A-H2B heterodimers. The octamer wraps approximately 147 bp of DNA. Post-translationally, monoubiquitination at Lys-35 (H2BK34Ub) by the MSL1/MSL2 dimer is required for histone H3 'Lys-4' (H3K4me) and 'Lys-79' (H3K79me) methylation and transcription activation at specific gene loci, such as HOXA9 and MEIS1 loci. Similarly, monoubiquitination at Lys-120 (H2BK120Ub) by the RNF20/40 complex gives a specific tag for epigenetic transcriptional activation and is also prerequisite for histone H3 'Lys-4' and 'Lys-79' methylation. It also functions cooperatively with the FACT dimer to stimulate elongation by RNA polymerase II. H2BK120Ub also acts as a regulator of mRNA splicing: deubiquitination by USP49 is required for efficient cotranscriptional splicing of a large set of exons. In terms of processing, phosphorylated on Ser-15 (H2BS14ph) by STK4/MST1 during apoptosis; which facilitates apoptotic chromatin condensation. Also phosphorylated on Ser-15 in response to DNA double strand breaks (DSBs), and in correlation with somatic hypermutation and immunoglobulin class-switch recombination. Phosphorylation at Ser-37 (H2BS36ph) by AMPK in response to stress promotes transcription. ADP-ribosylated by PARP1 or PARP2 on Ser-7 (H2BS6ADPr) in response to DNA damage. H2BS6ADPr promotes recruitment of CHD1L. Mono-ADP-ribosylated on Glu-3 (H2BE2ADPr) by PARP3 in response to single-strand breaks. Poly ADP-ribosylation on Glu-36 (H2BE35ADPr) by PARP1 regulates adipogenesis: it inhibits phosphorylation at Ser-37 (H2BS36ph), thereby blocking expression of pro-adipogenetic genes. Post-translationally, crotonylation (Kcr) is specifically present in male germ cells and marks testis-specific genes in post-meiotic cells, including X-linked genes that escape sex chromosome inactivation in haploid cells. Crotonylation marks active promoters and enhancers and confers resistance to transcriptional repressors. It is also associated with post-meiotically activated genes on autosomes. In terms of processing, glcNAcylation at Ser-112 promotes monoubiquitination of Lys-120. It fluctuates in response to extracellular glucose, and associates with transcribed genes. Lactylated in macrophages by EP300/P300 by using lactoyl-CoA directly derived from endogenous or exogenous lactate, leading to stimulates gene transcription.

It is found in the nucleus. It localises to the chromosome. In terms of biological role, core component of nucleosome. Nucleosomes wrap and compact DNA into chromatin, limiting DNA accessibility to the cellular machineries which require DNA as a template. Histones thereby play a central role in transcription regulation, DNA repair, DNA replication and chromosomal stability. DNA accessibility is regulated via a complex set of post-translational modifications of histones, also called histone code, and nucleosome remodeling. Functionally, has broad antibacterial activity. May contribute to the formation of the functional antimicrobial barrier of the colonic epithelium, and to the bactericidal activity of amniotic fluid. This chain is Histone H2B type 1, found in Rattus norvegicus (Rat).